The primary structure comprises 236 residues: Small ribosomal subunit protein uS5 (236 aa).

Positions 1–10 are enriched in basic and acidic residues; that stretch reads MTENNEKDIQ. The interval 1–64 is disordered; that stretch reads MTENNEKDIQ…GRDGGREAEK (64 aa). Over residues 11–27 the composition is skewed to low complexity; sequence VTEAVAAPATETAAPAT. The segment covering 28–64 has biased composition (basic and acidic residues); it reads TDDRRGGARRGERGDRGQGRGDRGGRGGRDGGREAEK. One can recognise an S5 DRBM domain in the interval 67 to 130; it reads FVERVVTINR…EEAKKSFFRV (64 aa).

This sequence belongs to the universal ribosomal protein uS5 family. As to quaternary structure, part of the 30S ribosomal subunit. Contacts proteins S4 and S8.

In terms of biological role, with S4 and S12 plays an important role in translational accuracy. Located at the back of the 30S subunit body where it stabilizes the conformation of the head with respect to the body. The polypeptide is Small ribosomal subunit protein uS5 (Arthrobacter sp. (strain FB24)).